A 455-amino-acid chain; its full sequence is Beta-1,4-mannosyltransferase bre-3 (455 aa).

This sequence belongs to the glycosyltransferase 2 family. As to expression, endothelial cells.

The protein resides in the cytoplasm. Its pathway is protein modification; protein glycosylation. Functionally, glycosyltransferase with a proposed role in glycosphingolipid biosynthesis. Involved in susceptibility to pore-forming crystal toxins in conjunction with bre-1, bre-2, bre-4 and bre-5. Involved in resistance to the nematotoxic C.cinerea galectin Cgl2. Has a role in determining brood size. This Caenorhabditis elegans protein is Beta-1,4-mannosyltransferase bre-3 (bre-3).